The following is a 296-amino-acid chain: SPbeta prophage-derived endonuclease YokF (296 aa).

Residues 1–19 (MKKVLLGFAAFTLSLSLAA) form the signal peptide. C20 carries the N-palmitoyl cysteine lipid modification. C20 carries the S-diacylglycerol cysteine lipid modification. Residues 20–65 (CSSNDSEKVSTEKETPQASTDVEKKTEQKESTKEKTADKSKEKDKK) form a disordered region. Over residues 24-65 (DSEKVSTEKETPQASTDVEKKTEQKESTKEKTADKSKEKDKK) the composition is skewed to basic and acidic residues. Positions 66-199 (ELVDVTLDRA…KSEKLSIWSK (134 aa)) constitute a TNase-like domain. D79 serves as a coordination point for Ca(2+). The active site involves R93. Ca(2+)-binding residues include D98 and T99. Catalysis depends on residues E101 and R144. A disordered region spans residues 218–296 (AVKKATTSKP…RDHDNYACER (79 aa)). Over residues 219-244 (VKKATTSKPAATQPTTPKASSETSTT) the composition is skewed to low complexity. Residues 284-296 (KMDRDHDNYACER) show a composition bias toward basic and acidic residues.

It depends on Ca(2+) as a cofactor. Requires Cu(2+) as cofactor. Mn(2+) serves as cofactor.

It is found in the cell membrane. With respect to regulation, inhibited by aurintricalboxylic acid but not by Zn(2+), Mn(2+), Hg(2+), 2-mercaptoethanol and sodium citrate. Neither inhibited nor activated by ATP. Functionally, catalyzes the hydrolysis of supercoiled double and single strand DNA and RNA. Involved in chromosomal DNA degradation and cell death caused by thermal stress. This chain is SPbeta prophage-derived endonuclease YokF (yokF), found in Bacillus subtilis (strain 168).